We begin with the raw amino-acid sequence, 474 residues long: Phenylalanine--tRNA ligase alpha subunit (474 aa).

L-phenylalanine contacts are provided by residues Thr317, 356-358 (QLE), and Tyr396. Residue Glu398 participates in Mg(2+) binding. Phe421 contributes to the L-phenylalanine binding site.

It belongs to the class-II aminoacyl-tRNA synthetase family. Phe-tRNA synthetase alpha subunit type 2 subfamily. In terms of assembly, tetramer of two alpha and two beta subunits. Requires Mg(2+) as cofactor.

It is found in the cytoplasm. The catalysed reaction is tRNA(Phe) + L-phenylalanine + ATP = L-phenylalanyl-tRNA(Phe) + AMP + diphosphate + H(+). The polypeptide is Phenylalanine--tRNA ligase alpha subunit (Archaeoglobus fulgidus (strain ATCC 49558 / DSM 4304 / JCM 9628 / NBRC 100126 / VC-16)).